A 480-amino-acid polypeptide reads, in one-letter code: Adenosylhomocysteinase (480 aa).

Substrate is bound by residues threonine 63, aspartate 142, and glutamate 203. Residue 204 to 206 (TTT) coordinates NAD(+). Substrate contacts are provided by lysine 233 and aspartate 237. NAD(+) contacts are provided by residues asparagine 238, 267–272 (GYGDVG), glutamate 290, asparagine 325, 346–348 (IGH), and asparagine 394.

It belongs to the adenosylhomocysteinase family. It depends on NAD(+) as a cofactor.

The protein resides in the cytoplasm. It catalyses the reaction S-adenosyl-L-homocysteine + H2O = L-homocysteine + adenosine. It participates in amino-acid biosynthesis; L-homocysteine biosynthesis; L-homocysteine from S-adenosyl-L-homocysteine: step 1/1. In terms of biological role, may play a key role in the regulation of the intracellular concentration of adenosylhomocysteine. The protein is Adenosylhomocysteinase of Xanthomonas campestris pv. campestris (strain 8004).